The sequence spans 219 residues: Ribose-5-phosphate isomerase A (219 aa).

Residues 29–32 (TGST), 82–85 (DGAD), and 95–98 (KGGG) each bind substrate. Glu-104 functions as the Proton acceptor in the catalytic mechanism. Lys-122 contributes to the substrate binding site.

This sequence belongs to the ribose 5-phosphate isomerase family. As to quaternary structure, homodimer.

The enzyme catalyses aldehydo-D-ribose 5-phosphate = D-ribulose 5-phosphate. The protein operates within carbohydrate degradation; pentose phosphate pathway; D-ribose 5-phosphate from D-ribulose 5-phosphate (non-oxidative stage): step 1/1. In terms of biological role, catalyzes the reversible conversion of ribose-5-phosphate to ribulose 5-phosphate. The polypeptide is Ribose-5-phosphate isomerase A (Chromobacterium violaceum (strain ATCC 12472 / DSM 30191 / JCM 1249 / CCUG 213 / NBRC 12614 / NCIMB 9131 / NCTC 9757 / MK)).